Reading from the N-terminus, the 147-residue chain is MKDRFYMTRAIKLSKLGEFTTSPNPNVGCVIVQNKKIVGEGWHKKYGENHAEINALNMAGEKAKGSTAYITLEPCNHFGKTPPCCDAIIQSGIKNVIISSLDPNPKVSGKGVLYLRKKGISVKIGLMSKESQKYNKGFFKRMRTGLP.

The 122-residue stretch at 1 to 122 folds into the CMP/dCMP-type deaminase domain; it reads MKDRFYMTRA…LYLRKKGISV (122 aa). A Zn(2+)-binding site is contributed by His50. Glu52 acts as the Proton donor in catalysis. Positions 75 and 84 each coordinate Zn(2+).

The protein belongs to the cytidine and deoxycytidylate deaminase family. Zn(2+) serves as cofactor.

The catalysed reaction is 2,5-diamino-6-hydroxy-4-(5-phosphoribosylamino)-pyrimidine + H2O + H(+) = 5-amino-6-(5-phospho-D-ribosylamino)uracil + NH4(+). It functions in the pathway cofactor biosynthesis; riboflavin biosynthesis; 5-amino-6-(D-ribitylamino)uracil from GTP: step 2/4. The polypeptide is Diaminohydroxyphosphoribosylamino-pyrimidine deaminase (ribD1) (Buchnera aphidicola subsp. Schizaphis graminum (strain Sg)).